The chain runs to 453 residues: Bifunctional protein GlmU (453 aa).

A pyrophosphorylase region spans residues 1–226 (MVAVAILAAG…YLEITGINDR (226 aa)). Residues 7 to 10 (LAAG), lysine 21, glutamine 73, and 78 to 79 (GT) each bind UDP-N-acetyl-alpha-D-glucosamine. A Mg(2+)-binding site is contributed by aspartate 103. The UDP-N-acetyl-alpha-D-glucosamine site is built by glycine 140, glutamate 155, asparagine 170, and asparagine 224. Position 224 (asparagine 224) interacts with Mg(2+). Residues 227–247 (KQLAMANGILQNRVKDHWMAQ) form a linker region. An N-acetyltransferase region spans residues 248–453 (GVTLIDPDSI…EWKKTIESKK (206 aa)). Positions 329 and 347 each coordinate UDP-N-acetyl-alpha-D-glucosamine. Histidine 359 functions as the Proton acceptor in the catalytic mechanism. Tyrosine 362 and asparagine 373 together coordinate UDP-N-acetyl-alpha-D-glucosamine. Acetyl-CoA contacts are provided by residues alanine 376, 382 to 383 (NY), alanine 419, and arginine 436.

This sequence in the N-terminal section; belongs to the N-acetylglucosamine-1-phosphate uridyltransferase family. It in the C-terminal section; belongs to the transferase hexapeptide repeat family. Homotrimer. Requires Mg(2+) as cofactor.

It localises to the cytoplasm. The enzyme catalyses alpha-D-glucosamine 1-phosphate + acetyl-CoA = N-acetyl-alpha-D-glucosamine 1-phosphate + CoA + H(+). It catalyses the reaction N-acetyl-alpha-D-glucosamine 1-phosphate + UTP + H(+) = UDP-N-acetyl-alpha-D-glucosamine + diphosphate. It functions in the pathway nucleotide-sugar biosynthesis; UDP-N-acetyl-alpha-D-glucosamine biosynthesis; N-acetyl-alpha-D-glucosamine 1-phosphate from alpha-D-glucosamine 6-phosphate (route II): step 2/2. Its pathway is nucleotide-sugar biosynthesis; UDP-N-acetyl-alpha-D-glucosamine biosynthesis; UDP-N-acetyl-alpha-D-glucosamine from N-acetyl-alpha-D-glucosamine 1-phosphate: step 1/1. The protein operates within bacterial outer membrane biogenesis; LPS lipid A biosynthesis. Catalyzes the last two sequential reactions in the de novo biosynthetic pathway for UDP-N-acetylglucosamine (UDP-GlcNAc). The C-terminal domain catalyzes the transfer of acetyl group from acetyl coenzyme A to glucosamine-1-phosphate (GlcN-1-P) to produce N-acetylglucosamine-1-phosphate (GlcNAc-1-P), which is converted into UDP-GlcNAc by the transfer of uridine 5-monophosphate (from uridine 5-triphosphate), a reaction catalyzed by the N-terminal domain. The sequence is that of Bifunctional protein GlmU from Rippkaea orientalis (strain PCC 8801 / RF-1) (Cyanothece sp. (strain PCC 8801)).